A 721-amino-acid polypeptide reads, in one-letter code: Long-chain-fatty-acid--CoA ligase ACSBG1 (721 aa).

The tract at residues 1 to 64 (MPRSSEAGYC…SHGLELSAPE (64 aa)) is disordered. Residues 26–43 (QQGASMGTSPDNSQTSSL) show a composition bias toward polar residues. Phosphoserine is present on residues Ser-34, Ser-50, Ser-53, and Ser-70. ATP-binding positions include 279 to 287 (TSGTTGNPK), 469 to 474 (AGYGLS), Asp-547, and Arg-562. Position 655 is a phosphotyrosine (Tyr-655). Residue Lys-698 participates in ATP binding.

Belongs to the ATP-dependent AMP-binding enzyme family. Bubblegum subfamily. In terms of tissue distribution, present in testis, at a lower level in brain, and at a very low level in ovary. Not detected in other tissues. tested. Present in Leydig cells of the adult testis and to a lesser degree in the seminiferous tubules in spermatogonia and Sertoli cells (at protein level).

The protein localises to the cytoplasm. It is found in the cytoplasmic vesicle. The protein resides in the microsome. Its subcellular location is the endoplasmic reticulum. It localises to the cell membrane. The catalysed reaction is a long-chain fatty acid + ATP + CoA = a long-chain fatty acyl-CoA + AMP + diphosphate. It carries out the reaction (E)-hexadec-2-enoate + ATP + CoA = (2E)-hexadecenoyl-CoA + AMP + diphosphate. It catalyses the reaction hexadecanoate + ATP + CoA = hexadecanoyl-CoA + AMP + diphosphate. Catalyzes the conversion of fatty acids such as long-chain and very long-chain fatty acids to their active form acyl-CoAs for both synthesis of cellular lipids, and degradation via beta-oxidation. Can activate diverse saturated, monosaturated and polyunsaturated fatty acids. The chain is Long-chain-fatty-acid--CoA ligase ACSBG1 from Rattus norvegicus (Rat).